Consider the following 665-residue polypeptide: GRB2-associated-binding protein 2 (665 aa).

Ser2 carries the phosphoserine modification. A PH domain is found at 8-119 (DVVCTGWLRK…WVQSICQICG (112 aa)). Residues 131–183 (RNLSSASHGPRSSPAEFSSSQHLLRERKSSAPSHSSQPTLFTFEPPMTSHMQP) form a disordered region. Phosphoserine occurs at positions 135, 142, 143, 149, 150, 160, 165, 211, 220, and 261. Polar residues predominate over residues 160-170 (SAPSHSSQPTL). Thr262 carries the phosphothreonine modification. Tyr263 carries the post-translational modification Phosphotyrosine. A Phosphothreonine modification is found at Thr275. Ser278 and Ser282 each carry phosphoserine. Thr284 is modified (phosphothreonine). Tyr290 carries the phosphotyrosine modification. Residue Thr328 is modified to Phosphothreonine. Disordered regions lie at residues 340–442 (TSGD…ENYV) and 491–517 (PSRG…PTPL). An SH3-binding motif is present at residues 348–355 (PPPRPPKP). Residue Ser365 is modified to Phosphoserine. Phosphothreonine occurs at positions 382 and 388. Ser402 is subject to Phosphoserine. Phosphothreonine is present on Thr405. Residues 412–423 (GSGESASWSAES) are compositionally biased toward low complexity. Ser420 and Ser423 each carry phosphoserine. Position 441 is a phosphotyrosine (Tyr441). The short motif at 499 to 508 (PPPVNRNLKP) is the SH3-binding element. Ser532 carries the post-translational modification Phosphoserine. 2 stretches are compositionally biased toward polar residues: residues 548 to 566 (SSSQ…STDS) and 578 to 600 (NPVS…STGS). Positions 548–631 (SSSQYCRPIS…SSVTSDEKVD (84 aa)) are disordered. At Ser612 the chain carries Phosphoserine. A Phosphotyrosine modification is found at Tyr632. Polar residues predominate over residues 646 to 659 (TMQEWTDVRQSSEP). A disordered region spans residues 646–665 (TMQEWTDVRQSSEPSKGAKL).

It belongs to the GAB family. Part of a complex composed of EEIG1, TNFRSF11A/RANK, PLCG2, GAB2, TEC and BTK; complex formation increases in the presence of TNFSF11/RANKL. Interacts with HCK. Interacts with SHC1; may mediate interaction with receptors. Interacts with SYK. Interacts with PI-3 kinase. Interacts with GRB2 (via SH3 2 domain). Interacts (phosphorylated) with PTPN11. Interacts with TNFRSF11A (via cytoplasmic domain). Interacts (phosphorylated) with 14-3-3 family proteins SFN, YWHAB, YWHAE, YWHAG, YWHAH, YWHAQ and YWHAZ; prevents interaction with GRB2 and attenuates GAB2 signaling. In terms of processing, phosphorylated upon EGF stimulation. Phosphorylated on tyrosine residues by HCK upon IL6 signaling. Phosphorylated on tyrosine residue(s) by the thrombopoietin receptor (TPOR), stem cell factor receptor (SCFR), and T-cell and B-cell antigen receptors, gp130, IL-2R and IL-3R. Phosphorylated upon stimulation of TNFRSF11A/RANK by TNFSF11/RANKL. Post-translationally, dephosphorylated by PTPN11.

It localises to the cytoplasm. Its subcellular location is the cell membrane. The protein resides in the membrane raft. Adapter protein which acts downstream of several membrane receptors including cytokine, antigen, hormone, cell matrix and growth factor receptors to regulate multiple signaling pathways. Regulates osteoclast differentiation mediating the TNFRSF11A/RANK signaling. In allergic response, it plays a role in mast cells activation and degranulation through PI-3-kinase regulation. Also involved in the regulation of cell proliferation and hematopoiesis. The sequence is that of GRB2-associated-binding protein 2 (Gab2) from Rattus norvegicus (Rat).